The chain runs to 494 residues: Cytochrome P450 2A10 (494 aa).

Lys379 is modified (N6-acetyllysine). Residue Cys439 coordinates heme.

This sequence belongs to the cytochrome P450 family. Requires heme as cofactor. Expressed in liver and lung as well as in nasal tissues.

It is found in the endoplasmic reticulum membrane. The protein resides in the microsome membrane. The catalysed reaction is an organic molecule + reduced [NADPH--hemoprotein reductase] + O2 = an alcohol + oxidized [NADPH--hemoprotein reductase] + H2O + H(+). Functionally, catalyzes the oxygenation of a variety of substrates, including ethanol and procarcinogens such as N-nitrosodiethylamine and phenacetin. Exhibits a high coumarin 7-hydroxylase activity. Converts also testosterone to androstenedione. The polypeptide is Cytochrome P450 2A10 (CYP2A10) (Oryctolagus cuniculus (Rabbit)).